Reading from the N-terminus, the 41-residue chain is SPbeta prophage-derived uncharacterized protein YosF (41 aa).

This is SPbeta prophage-derived uncharacterized protein YosF (yosF) from Bacillus subtilis (strain 168).